The chain runs to 618 residues: Dihydroxy-acid dehydratase (618 aa).

Asp-81 is a binding site for Mg(2+). Cys-122 serves as a coordination point for [2Fe-2S] cluster. Asp-123 and Lys-124 together coordinate Mg(2+). Lys-124 is modified (N6-carboxylysine). [2Fe-2S] cluster is bound at residue Cys-195. Glu-491 is a Mg(2+) binding site. The active-site Proton acceptor is the Ser-517.

Belongs to the IlvD/Edd family. Homodimer. [2Fe-2S] cluster serves as cofactor. The cofactor is Mg(2+).

The enzyme catalyses (2R)-2,3-dihydroxy-3-methylbutanoate = 3-methyl-2-oxobutanoate + H2O. It catalyses the reaction (2R,3R)-2,3-dihydroxy-3-methylpentanoate = (S)-3-methyl-2-oxopentanoate + H2O. It participates in amino-acid biosynthesis; L-isoleucine biosynthesis; L-isoleucine from 2-oxobutanoate: step 3/4. It functions in the pathway amino-acid biosynthesis; L-valine biosynthesis; L-valine from pyruvate: step 3/4. In terms of biological role, functions in the biosynthesis of branched-chain amino acids. Catalyzes the dehydration of (2R,3R)-2,3-dihydroxy-3-methylpentanoate (2,3-dihydroxy-3-methylvalerate) into 2-oxo-3-methylpentanoate (2-oxo-3-methylvalerate) and of (2R)-2,3-dihydroxy-3-methylbutanoate (2,3-dihydroxyisovalerate) into 2-oxo-3-methylbutanoate (2-oxoisovalerate), the penultimate precursor to L-isoleucine and L-valine, respectively. In Rhodopseudomonas palustris (strain TIE-1), this protein is Dihydroxy-acid dehydratase.